A 115-amino-acid polypeptide reads, in one-letter code: Galanin-like peptide (115 aa).

The signal sequence occupies residues 1–23; it reads MAPSVPLVLLLVLLLSLAETPAS. The propeptide occupies 86–115; sequence NVMEAFAKPEIGDLDVLSKKIPKEEDVLKS.

The protein belongs to the galanin family. As to expression, hypothalamus and pituitary gland.

The protein localises to the secreted. Functionally, hypothalamic neuropeptide which binds to the G-protein-coupled galanin receptors (GALR1, GALR2 and GALR3). Involved in a large number of putative physiological functions in CNS homeostatic processes, including the regulation of gonadotropin-releasing hormone secretion. In terms of biological role, exhibits potent and dose-dependent vasoconstrictor and anti-edema activity in the cutaneous microvasculature, a physiologic effects which does not appear to be mediated via GALR1 or GALR2. Exhibits antimicrobial activity against Gram-negative bacterias, inducing bacterial membrane blebbing. The protein is Galanin-like peptide (GALP) of Macaca nemestrina (Pig-tailed macaque).